A 150-amino-acid polypeptide reads, in one-letter code: Ankyrin repeat protein C18/B24 (150 aa).

The ANK repeat unit spans residues 41–73 (ENKTLLYYAVDVNNIQFAKRLLEYGASVTTSRS).

The chain is Ankyrin repeat protein C18/B24 from Vaccinia virus (strain Copenhagen) (VACV).